The following is a 741-amino-acid chain: Phosphoribosylformylglycinamidine synthase subunit PurL (741 aa).

Residue His-53 is part of the active site. Positions 56 and 95 each coordinate ATP. Glu-97 serves as a coordination point for Mg(2+). Residues Ser-98 to His-101 and Arg-120 contribute to the substrate site. His-99 functions as the Proton acceptor in the catalytic mechanism. Mg(2+) is bound at residue Asp-121. Gln-244 is a substrate binding site. Asp-274 contacts Mg(2+). Glu-318–Gln-320 serves as a coordination point for substrate. Asp-501 and Gly-538 together coordinate ATP. Asn-539 contacts Mg(2+). Ser-541 is a substrate binding site.

This sequence belongs to the FGAMS family. Monomer. Part of the FGAM synthase complex composed of 1 PurL, 1 PurQ and 2 PurS subunits.

It localises to the cytoplasm. The enzyme catalyses N(2)-formyl-N(1)-(5-phospho-beta-D-ribosyl)glycinamide + L-glutamine + ATP + H2O = 2-formamido-N(1)-(5-O-phospho-beta-D-ribosyl)acetamidine + L-glutamate + ADP + phosphate + H(+). Its pathway is purine metabolism; IMP biosynthesis via de novo pathway; 5-amino-1-(5-phospho-D-ribosyl)imidazole from N(2)-formyl-N(1)-(5-phospho-D-ribosyl)glycinamide: step 1/2. In terms of biological role, part of the phosphoribosylformylglycinamidine synthase complex involved in the purines biosynthetic pathway. Catalyzes the ATP-dependent conversion of formylglycinamide ribonucleotide (FGAR) and glutamine to yield formylglycinamidine ribonucleotide (FGAM) and glutamate. The FGAM synthase complex is composed of three subunits. PurQ produces an ammonia molecule by converting glutamine to glutamate. PurL transfers the ammonia molecule to FGAR to form FGAM in an ATP-dependent manner. PurS interacts with PurQ and PurL and is thought to assist in the transfer of the ammonia molecule from PurQ to PurL. This Latilactobacillus sakei subsp. sakei (strain 23K) (Lactobacillus sakei subsp. sakei) protein is Phosphoribosylformylglycinamidine synthase subunit PurL.